Here is a 116-residue protein sequence, read N- to C-terminus: MEYVEPLAPLYGGEYSTTGIVTLSVGIALLVLANAFAYALVKAFGIQSYYGRLLGGIVLLVLSMLLTLSTNSINKFRGAFTFAIGEIIIGGLDVINDKSGWSQPVVSPTVGCQGGA.

The next 3 membrane-spanning stretches (helical) occupy residues 20–40 (IVTL…AYAL), 53–73 (LLGG…TNSI), and 76–96 (FRGA…DVIN).

The protein resides in the host membrane. The protein is Putative transmembrane protein ORF116 of Acidianus bottle-shaped virus (isolate Italy/Pozzuoli) (ABV).